The primary structure comprises 69 residues: Conotoxin Eb6.20 (69 aa).

The signal sequence occupies residues V1–A17. A propeptide spanning residues E18 to R41 is cleaved from the precursor. Disulfide bonds link C43-C57, C50-C61, and C56-C68.

Belongs to the conotoxin O1 superfamily. Expressed by the venom duct.

It is found in the secreted. The sequence is that of Conotoxin Eb6.20 (E1) from Conus ebraeus (Hebrew cone).